Consider the following 92-residue polypeptide: YcgL domain-containing protein Sfri_1738 (92 aa).

Positions 1-85 constitute a YcgL domain; that stretch reads MICAVYKSGR…PQINLLEQHK (85 aa).

The chain is YcgL domain-containing protein Sfri_1738 from Shewanella frigidimarina (strain NCIMB 400).